The primary structure comprises 407 residues: Cytochrome P450-pinF2, plant-inducible (407 aa).

A heme-binding site is contributed by cysteine 356.

The protein belongs to the cytochrome P450 family. Requires heme as cofactor.

Its function is as follows. Not essential for virulence, but may be involved in the detoxification of plant protective agents at the site of wounding. The polypeptide is Cytochrome P450-pinF2, plant-inducible (cyp104) (Rhizobium radiobacter (Agrobacterium tumefaciens)).